We begin with the raw amino-acid sequence, 74 residues long: DNA-directed RNA polymerase subunit omega (74 aa).

It belongs to the RNA polymerase subunit omega family. The RNAP catalytic core consists of 2 alpha, 1 beta, 1 beta' and 1 omega subunit. When a sigma factor is associated with the core the holoenzyme is formed, which can initiate transcription.

It carries out the reaction RNA(n) + a ribonucleoside 5'-triphosphate = RNA(n+1) + diphosphate. Its function is as follows. Promotes RNA polymerase assembly. Latches the N- and C-terminal regions of the beta' subunit thereby facilitating its interaction with the beta and alpha subunits. The protein is DNA-directed RNA polymerase subunit omega of Solidesulfovibrio magneticus (strain ATCC 700980 / DSM 13731 / RS-1) (Desulfovibrio magneticus).